The chain runs to 447 residues: Kynurenine 3-monooxygenase (447 aa).

The protein belongs to the aromatic-ring hydroxylase family. KMO subfamily. It depends on FAD as a cofactor.

It carries out the reaction L-kynurenine + NADPH + O2 + H(+) = 3-hydroxy-L-kynurenine + NADP(+) + H2O. It functions in the pathway cofactor biosynthesis; NAD(+) biosynthesis; quinolinate from L-kynurenine: step 1/3. Its function is as follows. Catalyzes the hydroxylation of L-kynurenine (L-Kyn) to form 3-hydroxy-L-kynurenine (L-3OHKyn). Required for synthesis of quinolinic acid. This chain is Kynurenine 3-monooxygenase, found in Flavobacterium psychrophilum (strain ATCC 49511 / DSM 21280 / CIP 103535 / JIP02/86).